The primary structure comprises 510 residues: Maturase K (510 aa).

This sequence belongs to the intron maturase 2 family. MatK subfamily.

It localises to the plastid. The protein resides in the chloroplast. Functionally, usually encoded in the trnK tRNA gene intron. Probably assists in splicing its own and other chloroplast group II introns. In Gratiola officinalis (Hedgehyssop), this protein is Maturase K.